The primary structure comprises 450 residues: Transcription factor AP-2 gamma (450 aa).

Residue lysine 10 forms a Glycyl lysine isopeptide (Lys-Gly) (interchain with G-Cter in SUMO) linkage. Disordered stretches follow at residues glutamate 13–proline 63 and leucine 90–proline 126. The PPxY motif motif lies at tyrosine 59–tyrosine 64. Polar residues predominate over residues proline 95–glutamate 110. Phosphoserine; by PKA is present on serine 252. The tract at residues arginine 293–aspartate 424 is H-S-H (helix-span-helix), dimerization. The segment at glycine 431 to lysine 450 is disordered. Phosphoserine is present on serine 434. A compositionally biased stretch (basic and acidic residues) spans lysine 440–lysine 450.

The protein belongs to the AP-2 family. In terms of assembly, binds DNA as a dimer. Can form homodimers or heterodimers with other AP-2 family members. Interacts with WWOX. Interacts with UBE2I. Interacts with KCTD1; this interaction represses transcription activation. Interacts with CITED2 (via C-terminus); the interaction stimulates TFAP2B-transcriptional activity. Interacts with CITED4. Interacts with MTA1. Post-translationally, sumoylated on Lys-10; which inhibits transcriptional activity.

Its subcellular location is the nucleus. Its function is as follows. Sequence-specific DNA-binding transcription factor that interacts with cellular enhancer elements to regulate transcription of selected genes, and which plays a key role in early embryonic development. AP-2 factors bind to the consensus sequence 5'-GCCNNNGGC-3' and activate genes involved in a large spectrum of important biological functions. TFAP2C plays a key role in early embryonic development by regulating both inner cell mass (ICM) and trophectoderm differentiation. At the 8-cell stage, during morula development, controls expression of cell-polarity genes. Upon trophoblast commitment, binds to late trophectoderm genes in blastocysts together with CDX2, and later to extra-embryonic ectoderm genes together with SOX2. Binds to both closed and open chromatin with other transcription factors. Involved in the MTA1-mediated epigenetic regulation of ESR1 expression in breast cancer. This is Transcription factor AP-2 gamma (TFAP2C) from Homo sapiens (Human).